The sequence spans 70 residues: Turripeptide Lol9.1 (70 aa).

The first 20 residues, 1 to 20 (MKVYCLLLVLLVGLVSQAHG), serve as a signal peptide directing secretion. Positions 21–70 (KPTKRCLSVCSAEYEPVCGSDGKTYANKCHLMTEACWSPTSITLVHEGKC) constitute a Kazal-like domain. Disulfide bonds link Cys-26/Cys-56, Cys-30/Cys-49, and Cys-38/Cys-70.

The protein belongs to the conopeptide P-like superfamily. Expressed by the venom duct.

It localises to the secreted. Its function is as follows. Acts as a neurotoxin by inhibiting an ion channel. May also act as a serine protease inhibitor, since it possess the kazal serine protease inhibitor signature. The chain is Turripeptide Lol9.1 from Iotyrris olangoensis (Sea snail).